Consider the following 168-residue polypeptide: Peptidyl-prolyl cis-trans isomerase-like 3 (168 aa).

A PPIase cyclophilin-type domain is found at 1–156 (MSVTLHTNVG…SEIRMTGVTV (156 aa)).

Belongs to the cyclophilin-type PPIase family. PPIL3 subfamily.

The catalysed reaction is [protein]-peptidylproline (omega=180) = [protein]-peptidylproline (omega=0). Functionally, PPIases accelerate the folding of proteins. It catalyzes the cis-trans isomerization of proline imidic peptide bonds in oligopeptides. The polypeptide is Peptidyl-prolyl cis-trans isomerase-like 3 (CYP10) (Mycosarcoma maydis (Corn smut fungus)).